The primary structure comprises 359 residues: MAELPRERMDQVLKRFELIETQMAAGPSPDAYVKLASEYSELQEVANSIRALRKAEAELEDLDTMLADKSIDREIRELAEIDREEVESRVEDMQQKLQVLLLPKDEADEKNAILEIRAGTGGDEAALFAGDLFRMYERYASERGWRVEVVSASEGEAGGYKEIIASVTGRGVFSRLKFESGVHRVQRVPATEAQGRIHTSAATVAVLPEAEDIDVDIKPEDIRIDTMRASGAGGQHVNTTDSAVRITHLPTGIMVVSAEKSQHQNRARAMQILRARLFDMERSRAANERSEARRLQVGTGDRSERIRTYNFPQGRVTDHRINLTLYKLDRVMEGELDEVIDALIADHQSKLLAAEGAES.

Gln235 bears the N5-methylglutamine mark.

It belongs to the prokaryotic/mitochondrial release factor family. In terms of processing, methylated by PrmC. Methylation increases the termination efficiency of RF1.

It localises to the cytoplasm. Its function is as follows. Peptide chain release factor 1 directs the termination of translation in response to the peptide chain termination codons UAG and UAA. This chain is Peptide chain release factor 1, found in Chelativorans sp. (strain BNC1).